Reading from the N-terminus, the 252-residue chain is Triosephosphate isomerase (252 aa).

9 to 11 (NWK) lines the substrate pocket. H95 acts as the Electrophile in catalysis. The Proton acceptor role is filled by E167. Substrate is bound by residues G173, S213, and 234 to 235 (GG). S213 carries the post-translational modification Phosphoserine.

It belongs to the triosephosphate isomerase family. Homodimer.

The protein localises to the cytoplasm. The catalysed reaction is D-glyceraldehyde 3-phosphate = dihydroxyacetone phosphate. It participates in carbohydrate biosynthesis; gluconeogenesis. It functions in the pathway carbohydrate degradation; glycolysis; D-glyceraldehyde 3-phosphate from glycerone phosphate: step 1/1. Its function is as follows. Involved in the gluconeogenesis. Catalyzes stereospecifically the conversion of dihydroxyacetone phosphate (DHAP) to D-glyceraldehyde-3-phosphate (G3P). This chain is Triosephosphate isomerase, found in Oceanobacillus iheyensis (strain DSM 14371 / CIP 107618 / JCM 11309 / KCTC 3954 / HTE831).